We begin with the raw amino-acid sequence, 879 residues long: Alanine--tRNA ligase 1 (879 aa).

Histidine 566, histidine 570, cysteine 668, and histidine 672 together coordinate Zn(2+).

This sequence belongs to the class-II aminoacyl-tRNA synthetase family. Requires Zn(2+) as cofactor.

It is found in the cytoplasm. It catalyses the reaction tRNA(Ala) + L-alanine + ATP = L-alanyl-tRNA(Ala) + AMP + diphosphate. Its function is as follows. Catalyzes the attachment of alanine to tRNA(Ala) in a two-step reaction: alanine is first activated by ATP to form Ala-AMP and then transferred to the acceptor end of tRNA(Ala). Also edits incorrectly charged Ser-tRNA(Ala) and Gly-tRNA(Ala) via its editing domain. The polypeptide is Alanine--tRNA ligase 1 (Lachnoclostridium phytofermentans (strain ATCC 700394 / DSM 18823 / ISDg) (Clostridium phytofermentans)).